The chain runs to 220 residues: Ribosomal RNA large subunit methyltransferase E (220 aa).

S-adenosyl-L-methionine contacts are provided by glycine 60, tryptophan 62, aspartate 92, aspartate 108, and aspartate 133. The Proton acceptor role is filled by lysine 173.

The protein belongs to the class I-like SAM-binding methyltransferase superfamily. RNA methyltransferase RlmE family.

The protein localises to the cytoplasm. It carries out the reaction uridine(2552) in 23S rRNA + S-adenosyl-L-methionine = 2'-O-methyluridine(2552) in 23S rRNA + S-adenosyl-L-homocysteine + H(+). In terms of biological role, specifically methylates the uridine in position 2552 of 23S rRNA at the 2'-O position of the ribose in the fully assembled 50S ribosomal subunit. The chain is Ribosomal RNA large subunit methyltransferase E from Paraburkholderia phytofirmans (strain DSM 17436 / LMG 22146 / PsJN) (Burkholderia phytofirmans).